Reading from the N-terminus, the 213-residue chain is Andrastin A biosynthesis cluster protein B (213 aa).

Part of the gene cluster that mediates the biosynthesis of andrastins, meroterpenoid compounds that exhibit inhibitory activity against ras farnesyltransferase, suggesting that they could be promising leads for antitumor agents. The first step of the pathway is the synthesis of 3,5-dimethylorsellinic acid (DMOA) by the polyketide synthase adrD via condensation of one acetyl-CoA starter unit with 3 malonyl-CoA units and 2 methylations. DMAO is then converted to farnesyl-DMAO by the prenyltransferase adrG. The methyltransferase adrK catalyzes the methylation of the carboxyl group of farnesyl-DMAO to farnesyl-DMAO methyl ester which is further converted to epoxyfarnesyl-DMAO methyl ester by the FAD-dependent monooxygenase adrH. The terpene cyclase adrI then catalyzes the carbon skeletal rearrangement to generate the andrastin E, the first compound in the pathway having the andrastin scaffold, with the tetracyclic ring system. The post-cyclization tailoring enzymes adrF, adrE, adrJ, and adrA, are involved in the conversion of andrastin E into andrastin A. The short chain dehydrogenase adrF is responsible for the oxidation of the C-3 a hydroxyl group of andrastin E to yield the corresponding ketone, andrastin D. The ketoreductase adrE stereoselectively reduces the carbonyl moiety to reverse the stereochemistry of the C-3 position to yield andrastin F. The acetyltransferase adrJ is the acetyltransferase that attaches the acetyl group to the C-3 hydroxyl group of andrastin F to yield andrastin C. Finally, the cytochrome P450 monooxygenase adrA catalyzes two sequential oxidation reactions of the C-23 methyl group, to generate the corresponding alcohol andrastin B, and aldehyde andrastin A. This Penicillium rubens (strain ATCC 28089 / DSM 1075 / NRRL 1951 / Wisconsin 54-1255) (Penicillium chrysogenum) protein is Andrastin A biosynthesis cluster protein B.